Here is a 462-residue protein sequence, read N- to C-terminus: Kinetochore protein nsk1 (462 aa).

Residues 104–120 (PSKNHETSLSPSKSTID) are compositionally biased toward polar residues. Disordered stretches follow at residues 104 to 161 (PSKN…CPGI), 180 to 240 (EKYG…PLRT), and 320 to 462 (NQLF…NIQS). Positions 121–138 (NNERKLDNEIDNYKHDVK) are enriched in basic and acidic residues. Positions 146–156 (GKTSNPSQGTT) are enriched in polar residues. Basic and acidic residues predominate over residues 180–189 (EKYGKTDLGK). Residues 229–240 (KNRSSTFSPLRT) are compositionally biased toward polar residues. Basic and acidic residues predominate over residues 324-333 (KSEEEKDPVG). Residues 422–444 (WPQNLAKNNINSEPNTPTKSNID) show a composition bias toward polar residues. The span at 449 to 462 (HSARAHKTRKNIQS) shows a compositional bias: basic residues.

Interacts with dlc1. The dlc1-nsk1 complex seems to oligomerize in chain-like structures. Also binds directly to spindle microtubules. Post-translationally, phosphorylated by cdk1 at prometaphase arrest. Phosphorylation prevents nsk1 kinetochore and spindle targeting. Dephosphorylated by clp1 at anaphase onset controls its relocalization.

Its subcellular location is the nucleus. It localises to the nucleolus. It is found in the cytoplasm. The protein resides in the cytoskeleton. The protein localises to the spindle. Its subcellular location is the chromosome. It localises to the centromere. It is found in the kinetochore. Ensures chromosome alignment and accurate chromosome segregation during mitosis. Promotes proper kinetochore-microtubule (k-MT) interactions during anaphase B. The phosphorylation status of nsk1 affects the proper k-MT coupling, ensuring that it interacts stably only at the correct time during mitosis. In Schizosaccharomyces pombe (strain 972 / ATCC 24843) (Fission yeast), this protein is Kinetochore protein nsk1 (nsk1).